The primary structure comprises 185 residues: A-type ATP synthase subunit E (185 aa).

The protein belongs to the V-ATPase E subunit family. Has multiple subunits with at least A(3), B(3), C, D, E, F, H, I and proteolipid K(x).

The protein resides in the cell membrane. Functionally, component of the A-type ATP synthase that produces ATP from ADP in the presence of a proton gradient across the membrane. The sequence is that of A-type ATP synthase subunit E from Thermoplasma volcanium (strain ATCC 51530 / DSM 4299 / JCM 9571 / NBRC 15438 / GSS1).